We begin with the raw amino-acid sequence, 198 residues long: Molybdopterin synthase catalytic subunit (198 aa).

Substrate contacts are provided by residues 107–108 (HR), lysine 123, and 130–132 (KKE).

Belongs to the MoaE family. MOCS2B subfamily. As to quaternary structure, heterotetramer; composed of 2 small (MOCS2A) and 2 large (MOCS2B) subunits.

Its subcellular location is the cytoplasm. It catalyses the reaction 2 [molybdopterin-synthase sulfur-carrier protein]-C-terminal-Gly-aminoethanethioate + cyclic pyranopterin phosphate + H2O = molybdopterin + 2 [molybdopterin-synthase sulfur-carrier protein]-C-terminal Gly-Gly + 2 H(+). Its pathway is cofactor biosynthesis; molybdopterin biosynthesis. Catalytic subunit of the molybdopterin synthase complex, a complex that catalyzes the conversion of precursor Z into molybdopterin. Acts by mediating the incorporation of 2 sulfur atoms from thiocarboxylated MOCS2A into precursor Z to generate a dithiolene group. This Arabidopsis thaliana (Mouse-ear cress) protein is Molybdopterin synthase catalytic subunit.